A 577-amino-acid polypeptide reads, in one-letter code: PTS system lactose-specific EIICB component (577 aa).

In terms of domain architecture, PTS EIIC type-3 spans 4 to 405; that stretch reads VFDKLKPVFE…VLDVAIYFPF (402 aa). Transmembrane regions (helical) follow at residues 27–47, 63–83, 100–120, 133–153, 176–196, 219–239, 280–300, 326–346, and 386–406; these read GFIA…VAYV, LMVA…GTTA, INPV…SILP, QGLI…YVCI, LIPM…FKAA, YLGL…GVQG, VMNF…LFAA, FGMP…TPIV, and LAFV…FPFI. The region spanning 476–577 is the PTS EIIB type-3 domain; sequence EVDVLVLCAG…MALDFVESNL (102 aa). Catalysis depends on cysteine 483, which acts as the Phosphocysteine intermediate; for EIIB activity. Cysteine 483 is modified (phosphocysteine; by EIIA).

The protein resides in the cell membrane. The enzyme catalyses lactose(out) + N(pros)-phospho-L-histidyl-[protein] = lactose 6-phosphate(in) + L-histidyl-[protein]. In terms of biological role, the phosphoenolpyruvate-dependent sugar phosphotransferase system (sugar PTS), a major carbohydrate active transport system, catalyzes the phosphorylation of incoming sugar substrates concomitantly with their translocation across the cell membrane. The enzyme II LacEF PTS system is involved in lactose transport. The polypeptide is PTS system lactose-specific EIICB component (Lacticaseibacillus casei (Lactobacillus casei)).